Reading from the N-terminus, the 209-residue chain is Peroxynitrite isomerase 2 (209 aa).

A GXWXGXG motif is present at residues 56–62; the sequence is GVWRGEG. Heme b contacts are provided by lysine 172 and histidine 199.

It belongs to the nitrobindin family. In terms of assembly, homodimer. Requires heme b as cofactor.

It carries out the reaction peroxynitrite = nitrate. Its pathway is nitrogen metabolism. Functionally, heme-binding protein able to scavenge peroxynitrite and to protect free L-tyrosine against peroxynitrite-mediated nitration, by acting as a peroxynitrite isomerase that converts peroxynitrite to nitrate. Therefore, this protein likely plays a role in peroxynitrite sensing and in the detoxification of reactive nitrogen and oxygen species (RNS and ROS, respectively). Is able to bind nitric oxide (NO) in vitro, but may act as a sensor of peroxynitrite levels in vivo. This chain is Peroxynitrite isomerase 2, found in Mycolicibacterium gilvum (strain PYR-GCK) (Mycobacterium gilvum (strain PYR-GCK)).